The chain runs to 101 residues: NAD(P)H-quinone oxidoreductase subunit 4L, chloroplastic (101 aa).

3 consecutive transmembrane segments (helical) span residues 2-22 (ILEHVLVLSAYLFLIGLYGLI), 32-52 (MCLELILNAVNMNFVTFSDFF), and 61-81 (IFCIFVIAIAAAEAAIGLAIV).

This sequence belongs to the complex I subunit 4L family. As to quaternary structure, NDH is composed of at least 16 different subunits, 5 of which are encoded in the nucleus.

It localises to the plastid. Its subcellular location is the chloroplast thylakoid membrane. It catalyses the reaction a plastoquinone + NADH + (n+1) H(+)(in) = a plastoquinol + NAD(+) + n H(+)(out). It carries out the reaction a plastoquinone + NADPH + (n+1) H(+)(in) = a plastoquinol + NADP(+) + n H(+)(out). Functionally, NDH shuttles electrons from NAD(P)H:plastoquinone, via FMN and iron-sulfur (Fe-S) centers, to quinones in the photosynthetic chain and possibly in a chloroplast respiratory chain. The immediate electron acceptor for the enzyme in this species is believed to be plastoquinone. Couples the redox reaction to proton translocation, and thus conserves the redox energy in a proton gradient. This Arabis hirsuta (Hairy rock-cress) protein is NAD(P)H-quinone oxidoreductase subunit 4L, chloroplastic.